Reading from the N-terminus, the 330-residue chain is Ketol-acid reductoisomerase (NADP(+)) (330 aa).

The KARI N-terminal Rossmann domain occupies 3 to 184 (LPVYYDKDID…GGGRMGVLET (182 aa)). Residues 26-29 (YGAQ), Ser52, and Ser54 each bind NADP(+). The active site involves His109. NADP(+) is bound at residue Gly135. Residues 185–329 (SFKEECESDL…EILRAPFNHK (145 aa)) form the KARI C-terminal knotted domain. Residues Asp193, Glu197, Glu229, and Glu233 each coordinate Mg(2+). Residue Ser254 participates in substrate binding.

Belongs to the ketol-acid reductoisomerase family. It depends on Mg(2+) as a cofactor.

It catalyses the reaction (2R)-2,3-dihydroxy-3-methylbutanoate + NADP(+) = (2S)-2-acetolactate + NADPH + H(+). The enzyme catalyses (2R,3R)-2,3-dihydroxy-3-methylpentanoate + NADP(+) = (S)-2-ethyl-2-hydroxy-3-oxobutanoate + NADPH + H(+). It functions in the pathway amino-acid biosynthesis; L-isoleucine biosynthesis; L-isoleucine from 2-oxobutanoate: step 2/4. It participates in amino-acid biosynthesis; L-valine biosynthesis; L-valine from pyruvate: step 2/4. Its function is as follows. Involved in the biosynthesis of branched-chain amino acids (BCAA). Catalyzes an alkyl-migration followed by a ketol-acid reduction of (S)-2-acetolactate (S2AL) to yield (R)-2,3-dihydroxy-isovalerate. In the isomerase reaction, S2AL is rearranged via a Mg-dependent methyl migration to produce 3-hydroxy-3-methyl-2-ketobutyrate (HMKB). In the reductase reaction, this 2-ketoacid undergoes a metal-dependent reduction by NADPH to yield (R)-2,3-dihydroxy-isovalerate. The protein is Ketol-acid reductoisomerase (NADP(+)) of Helicobacter pylori (strain ATCC 700392 / 26695) (Campylobacter pylori).